The sequence spans 1356 residues: DNA-directed RNA polymerase subunit beta (1356 aa).

Belongs to the RNA polymerase beta chain family. As to quaternary structure, the RNAP catalytic core consists of 2 alpha, 1 beta, 1 beta' and 1 omega subunit. When a sigma factor is associated with the core the holoenzyme is formed, which can initiate transcription.

It catalyses the reaction RNA(n) + a ribonucleoside 5'-triphosphate = RNA(n+1) + diphosphate. Functionally, DNA-dependent RNA polymerase catalyzes the transcription of DNA into RNA using the four ribonucleoside triphosphates as substrates. This is DNA-directed RNA polymerase subunit beta from Caulobacter vibrioides (strain ATCC 19089 / CIP 103742 / CB 15) (Caulobacter crescentus).